A 189-amino-acid polypeptide reads, in one-letter code: uncharacterized protein (189 aa).

This sequence belongs to the inositol monophosphatase superfamily.

This is an uncharacterized protein from Leptospira biflexa.